The primary structure comprises 403 residues: Metacaspase-1 (403 aa).

The tract at residues 1–95 (MFPGSGHNTY…PSGSQSFGQN (95 aa)) is disordered. Positions 13-22 (YPPPQGPPPN) are enriched in pro residues. Composition is skewed to low complexity over residues 23-34 (NNGYNSGPNNSY) and 49-62 (QYDQ…QSQP). Active-site residues include His-193 and Cys-249.

This sequence belongs to the peptidase C14B family.

Functionally, involved in cell death (apoptosis). The chain is Metacaspase-1 (MCA1) from Scheffersomyces stipitis (strain ATCC 58785 / CBS 6054 / NBRC 10063 / NRRL Y-11545) (Yeast).